The following is a 355-amino-acid chain: Elongation factor Ts (355 aa).

The interval 82–85 is involved in Mg(2+) ion dislocation from EF-Tu; it reads TDFV.

The protein belongs to the EF-Ts family.

It localises to the cytoplasm. Functionally, associates with the EF-Tu.GDP complex and induces the exchange of GDP to GTP. It remains bound to the aminoacyl-tRNA.EF-Tu.GTP complex up to the GTP hydrolysis stage on the ribosome. This Helicobacter acinonychis (strain Sheeba) protein is Elongation factor Ts.